We begin with the raw amino-acid sequence, 225 residues long: Protein ZW2 (225 aa).

The DOG1 domain maps to 7-225 (SETFASFFND…FYLRLRDLGV (219 aa)).

In terms of biological role, may be involved in the regulation of abscisic acid (ABA) sensitivity. In Arabidopsis thaliana (Mouse-ear cress), this protein is Protein ZW2.